A 231-amino-acid polypeptide reads, in one-letter code: Acyltransferase PGAP2 (231 aa).

Topologically, residues 1 to 22 are cytoplasmic; that stretch reads MQQVPYGSVDRDKPLIRVPFTR. The chain crosses the membrane as a helical span at residues 23-43; the sequence is LAVITVCLPLLGLVACIVLAM. Residues 44-78 are Lumenal-facing; that stretch reads LYHYNDATYTHCQVPNYLPSISAAISLTPERYIWR. Residues 79–99 traverse the membrane as a helical segment; it reads FSIGLHSAPRFLVAAAYLSFY. Over 100–110 the chain is Cytoplasmic; sequence RGRFSRRLTEQ. Residues 111-131 form a helical membrane-spanning segment; sequence LLSGFTFLLALSENVGLLLLT. Topologically, residues 132-146 are lumenal; that stretch reads YVSSTETYSVHKSGF. The chain crosses the membrane as a helical span at residues 147 to 167; sequence ILFIGSSLFHMLCTCKLWSLI. At 168 to 179 the chain is on the cytoplasmic side; that stretch reads VKYSISSEEMMS. Residues 180-200 traverse the membrane as a helical segment; it reads YWFKLRLFLFNGGCCVLAVYF. The Lumenal portion of the chain corresponds to 201 to 231; sequence YRRHNTYCEEGITHASRCVSIWWCCPTWPST.

The protein belongs to the PGAP2 family.

It localises to the golgi apparatus membrane. Its function is as follows. Involved in the fatty acid remodeling steps of GPI-anchor maturation where the unsaturated acyl chain at sn-2 of inositol phosphate is replaced by a saturated stearoyl chain. May catalyze the second step of the fatty acid remodeling, by reacylating a lyso-GPI intermediate at sn-2 of inositol phosphate by a saturated chain. The fatty acid remodeling steps is critical for the integration of GPI-APs into lipid rafts. The sequence is that of Acyltransferase PGAP2 from Danio rerio (Zebrafish).